Here is a 587-residue protein sequence, read N- to C-terminus: Protein NDNF (587 aa).

The signal sequence occupies residues 1–24; the sequence is MQRSTMLPGVELLLLFLLSTSLHA. 8 N-linked (GlcNAc...) asparagine glycosylation sites follow: Asn109, Asn129, Asn190, Asn321, Asn334, Asn459, Asn498, and Asn558.

As to quaternary structure, binds heparin. Interacts with dally; the interaction promotes dally degradation. Interacts with dpp and gbb.

It is found in the secreted. It localises to the extracellular space. The protein resides in the extracellular matrix. In terms of biological role, secretory protein that acts as a feedback regulator of dpp/BMP, wg and hh signaling pathways. In the developing wing, is a dosage-dependent modulator of dpp/BMP signaling involved in wing growth and crossvein patterning; low levels promote and high levels inhibit dpp/BMP signaling. In the early pupal wing, inhibits dpp/BMP signaling activity to prevent the formation of ectopic crossveins in the posterior compartment. Binds to dpp and gbb to modulate their release and activity decreasing dpp/BMP signaling in the responding cells. During wing development regulates dpp/BMP coreceptor dally availability on the cell surface. Might have a role in testis development. This is Protein NDNF from Drosophila melanogaster (Fruit fly).